Here is a 335-residue protein sequence, read N- to C-terminus: Mycobacterial beta-ketoacyl-[acyl-carrier-protein] synthase III (335 aa).

Residues C122 and H258 contribute to the active site. The tract at residues 259–263 (QANSR) is ACP-binding. N289 is a catalytic residue.

Belongs to the thiolase-like superfamily. FabH family. Homodimer.

It is found in the cytoplasm. It catalyses the reaction malonyl-[ACP] + dodecanoyl-CoA + H(+) = 3-oxotetradecanoyl-[ACP] + CO2 + CoA. Its pathway is lipid metabolism; fatty acid biosynthesis. The protein operates within lipid metabolism; mycolic acid biosynthesis. In terms of biological role, catalyzes the condensation reaction of fatty acid synthesis by the addition to an acyl acceptor of two carbons from malonyl-ACP. Catalyzes the first condensation reaction which initiates fatty acid synthesis and may therefore play a role in governing the total rate of fatty acid production. Possesses both acetoacetyl-ACP synthase and acetyl transacylase activities. Its substrate specificity determines the biosynthesis of branched-chain and/or straight-chain of fatty acids. This Mycolicibacterium paratuberculosis (strain ATCC BAA-968 / K-10) (Mycobacterium paratuberculosis) protein is Mycobacterial beta-ketoacyl-[acyl-carrier-protein] synthase III.